Here is a 528-residue protein sequence, read N- to C-terminus: Na(+)/H(+) antiporter NhaB (528 aa).

11 helical membrane-spanning segments follow: residues 29 to 49 (LIIN…LLVI), 52 to 72 (IFTL…LLAI), 95 to 115 (VLLL…LLLF), 139 to 159 (AFLS…AVAV), 203 to 223 (LLMH…VGEP), 248 to 268 (VPVF…KIFG), 304 to 324 (AFIG…VGLI), 349 to 369 (EEAL…AVII), 390 to 410 (LVIF…VFVG), 448 to 468 (ATPN…APLI), and 476 to 496 (VWMA…AIEL).

Belongs to the NhaB Na(+)/H(+) (TC 2.A.34) antiporter family.

Its subcellular location is the cell inner membrane. The enzyme catalyses 2 Na(+)(in) + 3 H(+)(out) = 2 Na(+)(out) + 3 H(+)(in). Na(+)/H(+) antiporter that extrudes sodium in exchange for external protons. This chain is Na(+)/H(+) antiporter NhaB, found in Shewanella woodyi (strain ATCC 51908 / MS32).